A 207-amino-acid polypeptide reads, in one-letter code: Thiamine-phosphate synthase (207 aa).

Residues 38–42 and Asn70 each bind 4-amino-2-methyl-5-(diphosphooxymethyl)pyrimidine; that span reads QYRNK. Mg(2+) is bound by residues Asp71 and Asp90. Ser109 contributes to the 4-amino-2-methyl-5-(diphosphooxymethyl)pyrimidine binding site. 136–138 contributes to the 2-[(2R,5Z)-2-carboxy-4-methylthiazol-5(2H)-ylidene]ethyl phosphate binding site; that stretch reads TAT. Lys139 lines the 4-amino-2-methyl-5-(diphosphooxymethyl)pyrimidine pocket. 2-[(2R,5Z)-2-carboxy-4-methylthiazol-5(2H)-ylidene]ethyl phosphate contacts are provided by residues Gly165 and 185-186; that span reads VS.

The protein belongs to the thiamine-phosphate synthase family. Mg(2+) is required as a cofactor.

The catalysed reaction is 2-[(2R,5Z)-2-carboxy-4-methylthiazol-5(2H)-ylidene]ethyl phosphate + 4-amino-2-methyl-5-(diphosphooxymethyl)pyrimidine + 2 H(+) = thiamine phosphate + CO2 + diphosphate. It carries out the reaction 2-(2-carboxy-4-methylthiazol-5-yl)ethyl phosphate + 4-amino-2-methyl-5-(diphosphooxymethyl)pyrimidine + 2 H(+) = thiamine phosphate + CO2 + diphosphate. The enzyme catalyses 4-methyl-5-(2-phosphooxyethyl)-thiazole + 4-amino-2-methyl-5-(diphosphooxymethyl)pyrimidine + H(+) = thiamine phosphate + diphosphate. Its pathway is cofactor biosynthesis; thiamine diphosphate biosynthesis; thiamine phosphate from 4-amino-2-methyl-5-diphosphomethylpyrimidine and 4-methyl-5-(2-phosphoethyl)-thiazole: step 1/1. Functionally, condenses 4-methyl-5-(beta-hydroxyethyl)thiazole monophosphate (THZ-P) and 2-methyl-4-amino-5-hydroxymethyl pyrimidine pyrophosphate (HMP-PP) to form thiamine monophosphate (TMP). This is Thiamine-phosphate synthase from Xanthomonas campestris pv. campestris (strain 8004).